A 302-amino-acid polypeptide reads, in one-letter code: NAD kinase 2 (302 aa).

Aspartate 78 functions as the Proton acceptor in the catalytic mechanism. Residues 78–79 (DG), 152–153 (NE), aspartate 182, and 193–198 (TAYSLS) each bind NAD(+).

The protein belongs to the NAD kinase family. A divalent metal cation is required as a cofactor.

The protein localises to the cytoplasm. The enzyme catalyses NAD(+) + ATP = ADP + NADP(+) + H(+). Its function is as follows. Involved in the regulation of the intracellular balance of NAD and NADP, and is a key enzyme in the biosynthesis of NADP. Catalyzes specifically the phosphorylation on 2'-hydroxyl of the adenosine moiety of NAD to yield NADP. The protein is NAD kinase 2 of Prochlorococcus marinus (strain NATL2A).